The primary structure comprises 808 residues: Leucine-rich repeat-containing protein 41 (808 aa).

Residues 45–54 (ALFELCGRAV) are interaction with Elongin BC complex. Phosphoserine occurs at positions 155, 276, and 326. Disordered stretches follow at residues 269 to 289 (ASRG…SRRP) and 304 to 404 (TRRK…GSGA). Threonine 327 bears the Phosphothreonine mark. Low complexity predominate over residues 357–379 (PSSAPTAASSSTSSKRAPASSVS). Position 369 is a phosphoserine (serine 369). The segment covering 383-397 (PLKRFKRATGKKGPR) has biased composition (basic residues). LRR repeat units follow at residues 483–503 (WVSL…IFRL), 514–526 (AGCR…LSDL), 527–551 (FSPL…VLSI), 609–631 (SGSL…FGLV), 632–655 (LQTL…LADC), 697–724 (NSTL…VFSE), and 727–748 (SSSL…LLEF).

Part of an E3 ubiquitin-protein ligase complex with Elongin BC (ELOB and ELOC), RBX1 and CUL5. Component of a probable ECS(LRRC41) complex which contains CUL5, RNF7/RBX2, Elongin BC and LRRC41. Interacts with CUL5, RNF7, ELOB and ELOC.

Its pathway is protein modification; protein ubiquitination. Its function is as follows. Probable substrate recognition component of an ECS (Elongin BC-CUL2/5-SOCS-box protein) E3 ubiquitin ligase complex which mediates the ubiquitination and subsequent proteasomal degradation of target proteins. This chain is Leucine-rich repeat-containing protein 41 (Lrrc41), found in Rattus norvegicus (Rat).